A 156-amino-acid polypeptide reads, in one-letter code: Small ribosomal subunit protein uS7 (156 aa).

Belongs to the universal ribosomal protein uS7 family. As to quaternary structure, part of the 30S ribosomal subunit. Contacts proteins S9 and S11.

One of the primary rRNA binding proteins, it binds directly to 16S rRNA where it nucleates assembly of the head domain of the 30S subunit. Is located at the subunit interface close to the decoding center, probably blocks exit of the E-site tRNA. The protein is Small ribosomal subunit protein uS7 of Mycolicibacterium gilvum (strain PYR-GCK) (Mycobacterium gilvum (strain PYR-GCK)).